A 415-amino-acid polypeptide reads, in one-letter code: Esterase FrsA (415 aa).

It belongs to the FrsA family.

It catalyses the reaction a carboxylic ester + H2O = an alcohol + a carboxylate + H(+). Functionally, catalyzes the hydrolysis of esters. The protein is Esterase FrsA of Vibrio parahaemolyticus serotype O3:K6 (strain RIMD 2210633).